A 51-amino-acid polypeptide reads, in one-letter code: Insulin (51 aa).

3 disulfide bridges follow: Cys-8-Cys-37, Cys-20-Cys-50, and Cys-36-Cys-41.

The protein belongs to the insulin family. Heterodimer of a B chain and an A chain linked by two disulfide bonds.

The protein localises to the secreted. Its function is as follows. Insulin decreases blood glucose concentration. It increases cell permeability to monosaccharides, amino acids and fatty acids. It accelerates glycolysis, the pentose phosphate cycle, and glycogen synthesis in liver. This chain is Insulin, found in Pagrus major (Red sea bream).